The following is a 486-amino-acid chain: MTFEDLRQKLKSGEVSSKELVQEKINRINELDPTLNSFLIVNTELALSKAEHIDKQIASGDHLPPLSGIPIAIKDNLCTKGIKTTCASKILDNFVPPYESTVTKKLLNAGAIMIGKTNMDEFAMGSSTETSAFGPTLNPWNITKVPGGSSGGSAASVAAGLCYGSLGSDTGGSIRQPASFCGVVGMKPTYGRVSRWGLIAFASSLDQVGPFANNVSDAAEILQVISGKDELDSTTVDIPVPNYLETLSKSIKGMKIGLIDNCFDHEGLATDVKESVLSSASLLENLGAEIVNISCPRFNDGIATYYVIAPSEASANLARYDGVKYGFRAEDEQSLIEMTSKSRALGFGSEVKRRILIGTYALSAGYVDAYYKKAQQVRTLIRRDFDDAFKKVDVLLAPTAPTTAFGSGDNIDNPMAMYLSDLLTIPANLAGLPAISLPCGFDKYGLPIGLQLIGNVFEEGKLFQVANQFEKAAEVYKNRPKTDFTL.

Catalysis depends on charge relay system residues K74 and S149. S173 (acyl-ester intermediate) is an active-site residue.

It belongs to the amidase family. GatA subfamily. In terms of assembly, heterotrimer of A, B and C subunits.

It catalyses the reaction L-glutamyl-tRNA(Gln) + L-glutamine + ATP + H2O = L-glutaminyl-tRNA(Gln) + L-glutamate + ADP + phosphate + H(+). In terms of biological role, allows the formation of correctly charged Gln-tRNA(Gln) through the transamidation of misacylated Glu-tRNA(Gln) in organisms which lack glutaminyl-tRNA synthetase. The reaction takes place in the presence of glutamine and ATP through an activated gamma-phospho-Glu-tRNA(Gln). The sequence is that of Glutamyl-tRNA(Gln) amidotransferase subunit A from Prochlorococcus marinus (strain NATL2A).